Here is a 328-residue protein sequence, read N- to C-terminus: Phosphate acyltransferase (328 aa).

It belongs to the PlsX family. Homodimer. Probably interacts with PlsY.

Its subcellular location is the cytoplasm. The enzyme catalyses a fatty acyl-[ACP] + phosphate = an acyl phosphate + holo-[ACP]. It functions in the pathway lipid metabolism; phospholipid metabolism. Catalyzes the reversible formation of acyl-phosphate (acyl-PO(4)) from acyl-[acyl-carrier-protein] (acyl-ACP). This enzyme utilizes acyl-ACP as fatty acyl donor, but not acyl-CoA. This chain is Phosphate acyltransferase, found in Campylobacter jejuni subsp. jejuni serotype O:6 (strain 81116 / NCTC 11828).